Here is a 92-residue protein sequence, read N- to C-terminus: Small ribosomal subunit protein uS19 (92 aa).

Belongs to the universal ribosomal protein uS19 family.

In terms of biological role, protein S19 forms a complex with S13 that binds strongly to the 16S ribosomal RNA. The polypeptide is Small ribosomal subunit protein uS19 (Streptococcus pyogenes serotype M49 (strain NZ131)).